The chain runs to 200 residues: uncharacterized protein (200 aa).

A Response regulatory domain is found at 3-119 (RLFIAEDQRM…DLADAIRKCV (117 aa)). The residue at position 54 (aspartate 54) is a 4-aspartylphosphate. The region spanning 133 to 198 (MMRDENPLTV…EAASIAEEKG (66 aa)) is the HTH luxR-type domain. Residues 157–176 (TKDITLELYLSQGTVRNYIS) constitute a DNA-binding region (H-T-H motif).

Phosphorylated by YvfT.

The protein localises to the cytoplasm. Its function is as follows. Member of the two-component regulatory system YvfT/YvfU. This is an uncharacterized protein from Bacillus subtilis (strain 168).